The following is a 255-amino-acid chain: Imidazole glycerol phosphate synthase subunit HisF (255 aa).

Active-site residues include Asp12 and Asp131.

This sequence belongs to the HisA/HisF family. In terms of assembly, heterodimer of HisH and HisF.

It is found in the cytoplasm. It carries out the reaction 5-[(5-phospho-1-deoxy-D-ribulos-1-ylimino)methylamino]-1-(5-phospho-beta-D-ribosyl)imidazole-4-carboxamide + L-glutamine = D-erythro-1-(imidazol-4-yl)glycerol 3-phosphate + 5-amino-1-(5-phospho-beta-D-ribosyl)imidazole-4-carboxamide + L-glutamate + H(+). The protein operates within amino-acid biosynthesis; L-histidine biosynthesis; L-histidine from 5-phospho-alpha-D-ribose 1-diphosphate: step 5/9. IGPS catalyzes the conversion of PRFAR and glutamine to IGP, AICAR and glutamate. The HisF subunit catalyzes the cyclization activity that produces IGP and AICAR from PRFAR using the ammonia provided by the HisH subunit. The sequence is that of Imidazole glycerol phosphate synthase subunit HisF from Neisseria meningitidis serogroup C (strain 053442).